A 105-amino-acid polypeptide reads, in one-letter code: CRISPR-associated endoribonuclease Cas2 1 (105 aa).

Asp20 provides a ligand contact to Mg(2+).

Belongs to the CRISPR-associated endoribonuclease Cas2 protein family. In terms of assembly, homodimer, forms a heterotetramer with a Cas1 homodimer. Requires Mg(2+) as cofactor.

Functionally, CRISPR (clustered regularly interspaced short palindromic repeat), is an adaptive immune system that provides protection against mobile genetic elements (viruses, transposable elements and conjugative plasmids). CRISPR clusters contain sequences complementary to antecedent mobile elements and target invading nucleic acids. CRISPR clusters are transcribed and processed into CRISPR RNA (crRNA). Functions as a ssRNA-specific endoribonuclease. Involved in the integration of spacer DNA into the CRISPR cassette. The polypeptide is CRISPR-associated endoribonuclease Cas2 1 (cas21) (Nitrosomonas europaea (strain ATCC 19718 / CIP 103999 / KCTC 2705 / NBRC 14298)).